A 213-amino-acid chain; its full sequence is Superoxide dismutase [Fe] (213 aa).

Fe cation contacts are provided by H28, H82, D164, and H168.

This sequence belongs to the iron/manganese superoxide dismutase family. Homotetramer. It depends on Fe cation as a cofactor.

It catalyses the reaction 2 superoxide + 2 H(+) = H2O2 + O2. Functionally, destroys superoxide anion radicals which are normally produced within the cells and which are toxic to biological systems. This is Superoxide dismutase [Fe] (sodB) from Aquifex pyrophilus.